The chain runs to 43 residues: Protein PsbN (43 aa).

A helical transmembrane segment spans residues A4 to Y24.

It belongs to the PsbN family.

Its subcellular location is the plastid. It localises to the chloroplast thylakoid membrane. Functionally, may play a role in photosystem I and II biogenesis. The sequence is that of Protein PsbN from Marchantia polymorpha (Common liverwort).